Consider the following 249-residue polypeptide: Anamorsin homolog (249 aa).

An N-terminal SAM-like domain region spans residues methionine 1–phenylalanine 130. A linker region spans residues alanine 131–lysine 161. [2Fe-2S] cluster contacts are provided by cysteine 172, cysteine 181, cysteine 184, and cysteine 186. A fe-S binding site A region spans residues cysteine 172 to cysteine 186. [4Fe-4S] cluster-binding residues include cysteine 210, cysteine 213, cysteine 221, and cysteine 224. Short sequence motifs (cx2C motif) lie at residues cysteine 210 to cysteine 213 and cysteine 221 to cysteine 224. The fe-S binding site B stretch occupies residues cysteine 210 to cysteine 224.

This sequence belongs to the anamorsin family. Monomer. [2Fe-2S] cluster serves as cofactor. Requires [4Fe-4S] cluster as cofactor.

It localises to the cytoplasm. The protein localises to the mitochondrion intermembrane space. Functionally, component of the cytosolic iron-sulfur (Fe-S) protein assembly (CIA) machinery. Required for the maturation of extramitochondrial Fe-S proteins. Part of an electron transfer chain functioning in an early step of cytosolic Fe-S biogenesis, facilitating the de novo assembly of a [4Fe-4S] cluster on the cytosolic Fe-S scaffold complex. Electrons are transferred from NADPH via a FAD- and FMN-containing diflavin oxidoreductase. Together with the diflavin oxidoreductase, also required for the assembly of the diferric tyrosyl radical cofactor of ribonucleotide reductase (RNR), probably by providing electrons for reduction during radical cofactor maturation in the catalytic small subunit. The chain is Anamorsin homolog from Drosophila grimshawi (Hawaiian fruit fly).